Consider the following 357-residue polypeptide: Alanine racemase (357 aa).

Lys-33 functions as the Proton acceptor; specific for D-alanine in the catalytic mechanism. Lys-33 carries the N6-(pyridoxal phosphate)lysine modification. Arg-130 contributes to the substrate binding site. Tyr-252 (proton acceptor; specific for L-alanine) is an active-site residue. Substrate is bound at residue Met-300.

It belongs to the alanine racemase family. Requires pyridoxal 5'-phosphate as cofactor.

The catalysed reaction is L-alanine = D-alanine. It participates in amino-acid biosynthesis; D-alanine biosynthesis; D-alanine from L-alanine: step 1/1. Its function is as follows. Catalyzes the interconversion of L-alanine and D-alanine. May also act on other amino acids. This Acidiphilium cryptum (strain JF-5) protein is Alanine racemase (alr).